The following is a 782-amino-acid chain: Coiled-coil alpha-helical rod protein 1 (782 aa).

Composition is skewed to basic and acidic residues over residues 62–74 (ERDV…EPGR) and 208–218 (ETRRAGEAKEL). Disordered stretches follow at residues 62–82 (ERDV…WGLE) and 177–218 (EQLS…AKEL). Coiled coils occupy residues 82-314 (EGSQ…ELTR), 344-437 (LMVQ…NAVS), and 498-691 (VADV…QQEG).

Its subcellular location is the cytoplasm. It is found in the nucleus. Its function is as follows. May be a regulator of keratinocyte proliferation or differentiation. This is Coiled-coil alpha-helical rod protein 1 (CCHCR1) from Pan troglodytes (Chimpanzee).